A 255-amino-acid chain; its full sequence is Glutamate racemase (255 aa).

Residues 7–8 and 39–40 contribute to the substrate site; these read DS and YG. Cysteine 70 functions as the Proton donor/acceptor in the catalytic mechanism. 71–72 serves as a coordination point for substrate; that stretch reads NT. Catalysis depends on cysteine 181, which acts as the Proton donor/acceptor. 182-183 provides a ligand contact to substrate; it reads TH.

It belongs to the aspartate/glutamate racemases family.

The enzyme catalyses L-glutamate = D-glutamate. Its pathway is cell wall biogenesis; peptidoglycan biosynthesis. In terms of biological role, provides the (R)-glutamate required for cell wall biosynthesis. The protein is Glutamate racemase of Helicobacter acinonychis (strain Sheeba).